Reading from the N-terminus, the 186-residue chain is Peptidoglycan-recognition protein SD (186 aa).

The signal sequence occupies residues 1–18 (MTWIGLLIVGLTAIAVQG). The N-acetylmuramoyl-L-alanine amidase domain maps to 47 to 169 (AVIAHTAGGA…RQVSATKSPG (123 aa)). Cysteine 57 and cysteine 63 are oxidised to a cystine. N-linked (GlcNAc...) asparagine glycosylation is present at asparagine 181.

This sequence belongs to the N-acetylmuramoyl-L-alanine amidase 2 family. As to expression, in larvae, it is mainly expressed in fat body. Also expressed in uninduced hemocytes and mbn-2 cells.

The protein localises to the secreted. Its function is as follows. Peptidoglycan-recognition protein that plays a key role in innate immunity by binding to peptidoglycans (PGN) of Gram-positive bacteria and activating the Toll pathway. Has no activity against on Gram-negative bacteria and fungi. Shows some partial redundancy with PRPGP-SA in Gram-positive bacteria recognition. May act by activating the proteolytic cleavage of Spatzle and the subsequent activation of Toll pathway. Recognizes S.aureus PGN. This Drosophila melanogaster (Fruit fly) protein is Peptidoglycan-recognition protein SD (PGRP-SD).